The sequence spans 263 residues: Tryptophan synthase alpha chain (263 aa).

Active-site proton acceptor residues include Glu47 and Asp58.

This sequence belongs to the TrpA family. As to quaternary structure, tetramer of two alpha and two beta chains.

It is found in the plastid. Its subcellular location is the chloroplast. It carries out the reaction (1S,2R)-1-C-(indol-3-yl)glycerol 3-phosphate + L-serine = D-glyceraldehyde 3-phosphate + L-tryptophan + H2O. The protein operates within amino-acid biosynthesis; L-tryptophan biosynthesis; L-tryptophan from chorismate: step 5/5. Its function is as follows. The alpha subunit is responsible for the aldol cleavage of indoleglycerol phosphate to indole and glyceraldehyde 3-phosphate. The chain is Tryptophan synthase alpha chain from Antithamnion sp. (Red alga).